We begin with the raw amino-acid sequence, 155 residues long: Keratin-associated protein 4-7 (155 aa).

Tandem repeats lie at residues 5–9 (CCGSV), 24–28 (CCRPS), 29–33 (CCQTT), 34–38 (CCRTT), 44–48 (CCVSS), 49–53 (CCRPQ), 54–58 (CCQSV), 59–63 (CCQPT), 64–68 (CCRPT), 69–73 (CCETT), 74–78 (CCHPR), 79–83 (CCISS), 84–88 (CCRPS), 89–93 (CCMSS), 94–98 (CCKPQ), 99–103 (CCQSV), 104–108 (CCQPT), 109–113 (CCRPS), 114–118 (CCRPC), and 119–123 (CCLRP). Residues 5 to 123 (CCGSVCSDQG…CCRPCCCLRP (119 aa)) are 20 X 5 AA repeats of C-C-[GIKRQVHEML]-[SPTRV]-[STVQRCP].

This sequence belongs to the KRTAP type 4 family. In terms of assembly, interacts with hair keratins. Expressed in the hair follicles.

In terms of biological role, in the hair cortex, hair keratin intermediate filaments are embedded in an interfilamentous matrix, consisting of hair keratin-associated proteins (KRTAP), which are essential for the formation of a rigid and resistant hair shaft through their extensive disulfide bond cross-linking with abundant cysteine residues of hair keratins. The matrix proteins include the high-sulfur and high-glycine-tyrosine keratins. This is Keratin-associated protein 4-7 (KRTAP4-7) from Homo sapiens (Human).